The primary structure comprises 248 residues: Isoprenyl transferase (248 aa).

Aspartate 23 is a catalytic residue. Aspartate 23 provides a ligand contact to Mg(2+). Residues 24–27 (GNGR), tryptophan 28, arginine 36, histidine 40, and 68–70 (STE) contribute to the substrate site. Asparagine 71 serves as the catalytic Proton acceptor. Substrate is bound by residues tryptophan 72, arginine 74, arginine 185, and 191-193 (RIS). Residue glutamate 204 coordinates Mg(2+).

This sequence belongs to the UPP synthase family. As to quaternary structure, homodimer. The cofactor is Mg(2+).

Functionally, catalyzes the condensation of isopentenyl diphosphate (IPP) with allylic pyrophosphates generating different type of terpenoids. The chain is Isoprenyl transferase from Neisseria meningitidis serogroup A / serotype 4A (strain DSM 15465 / Z2491).